A 1050-amino-acid chain; its full sequence is Self-sufficient cytochrome P450 monooxygenase CYP505E5 (1050 aa).

Cys405 contacts heme. The disordered stretch occupies residues 467–491; that stretch reads RRSMLVARDGSSGESSNHLAEARGD. In terms of domain architecture, Flavodoxin-like spans 500–641; it reads VSFFYGSNSG…DLEAWEETSL (142 aa). FMN-binding positions include 506–510 and 585–617; these read SNSGT and VFGC…TRLA. The 229-residue stretch at 679–907 folds into the FAD-binding FR-type domain; the sequence is KGLIEAKVTA…RPAKESFHLP (229 aa).

This sequence in the N-terminal section; belongs to the cytochrome P450 family. FAD is required as a cofactor. It depends on FMN as a cofactor. Heme serves as cofactor.

It catalyses the reaction 2 oxidized [cytochrome P450] + NADPH = 2 reduced [cytochrome P450] + NADP(+) + H(+). The catalysed reaction is an organic molecule + reduced [NADPH--hemoprotein reductase] + O2 = an alcohol + oxidized [NADPH--hemoprotein reductase] + H2O + H(+). It carries out the reaction dodecanoate + reduced [NADPH--hemoprotein reductase] + O2 = 5-hydroxydodecanoate + oxidized [NADPH--hemoprotein reductase] + H2O + H(+). The enzyme catalyses tetradecanoate + reduced [NADPH--hemoprotein reductase] + O2 = 7-hydroxytetradecanoate + oxidized [NADPH--hemoprotein reductase] + H2O + H(+). It catalyses the reaction dodecan-1-ol + reduced [NADPH--hemoprotein reductase] + O2 = 1,5-dodecanediol + oxidized [NADPH--hemoprotein reductase] + H2O + H(+). The catalysed reaction is dodecan-1-ol + reduced [NADPH--hemoprotein reductase] + O2 = 1,4-dodecanediol + oxidized [NADPH--hemoprotein reductase] + H2O + H(+). It carries out the reaction dodecan-1-ol + reduced [NADPH--hemoprotein reductase] + O2 = 1,6-dodecanediol + oxidized [NADPH--hemoprotein reductase] + H2O + H(+). Self-sufficient cytochrome P450 monooxygenase that catalyzes the regioselective in-chain hydroxylation of alkanes, fatty alcohols, and fatty acids at the omega-7 position. Performs hydroxylation of C10-C16 n-alkanes and C12 and C14 fatty alcohols; and thereby enables the one step biocatalytic synthesis of rare alcohols such as 5-dodecanol and 7-tetradecanol. Converts 1-dodecanol into 1,5-dodecanediol as major product with very little sub-terminally hydroxylated products with the 1,4-dodecanediol and 1,6-dodecanediol more abundant. Converts dodecanoic acid to 5-hydroxydodecanoic acid which can be further converted into delta-dodecalactone by lactonization of the 5-hydroxy acid at low pH. Also gives sub-terminal hydroxylation of dodecanoic acid with 9-hydroxydodecanoic acid being the second most abundant product. This is Self-sufficient cytochrome P450 monooxygenase CYP505E5 from Aspergillus niger.